The primary structure comprises 234 residues: Triosephosphate isomerase (234 aa).

A substrate-binding site is contributed by 8–10 (NFK). Catalysis depends on His-90, which acts as the Electrophile. Residue Glu-159 is the Proton acceptor of the active site. 2 residues coordinate substrate: Gly-165 and Ser-197.

The protein belongs to the triosephosphate isomerase family. As to quaternary structure, homodimer.

It localises to the cytoplasm. The catalysed reaction is D-glyceraldehyde 3-phosphate = dihydroxyacetone phosphate. Its pathway is carbohydrate biosynthesis; gluconeogenesis. It participates in carbohydrate degradation; glycolysis; D-glyceraldehyde 3-phosphate from glycerone phosphate: step 1/1. Functionally, involved in the gluconeogenesis. Catalyzes stereospecifically the conversion of dihydroxyacetone phosphate (DHAP) to D-glyceraldehyde-3-phosphate (G3P). This chain is Triosephosphate isomerase, found in Helicobacter pylori (strain G27).